Reading from the N-terminus, the 307-residue chain is Universal stress protein A family protein C25B2.10 (307 aa).

The interval 1 to 63 (MSESAPAGSK…RSSMEQPTFR (63 aa)) is disordered. Residues 21 to 30 (PEPRTSKDQQ) show a composition bias toward basic and acidic residues. Ser-44 is modified (phosphoserine). Thr-48 bears the Phosphothreonine mark. Ser-98 and Ser-102 each carry phosphoserine.

The protein belongs to the universal stress protein A family.

It is found in the barrier septum. It localises to the cell tip. In Schizosaccharomyces pombe (strain 972 / ATCC 24843) (Fission yeast), this protein is Universal stress protein A family protein C25B2.10.